We begin with the raw amino-acid sequence, 423 residues long: Phosphoribosylamine--glycine ligase (423 aa).

Residues 107–312 form the ATP-grasp domain; sequence KDLCARYGIP…LLPLLYAAAT (206 aa). 133–193 serves as a coordination point for ATP; that stretch reads IREEGAPIVI…EAYLDGEEAS (61 aa). Glu-282 and Asn-284 together coordinate Mg(2+).

It belongs to the GARS family. It depends on Mg(2+) as a cofactor. Mn(2+) serves as cofactor.

The enzyme catalyses 5-phospho-beta-D-ribosylamine + glycine + ATP = N(1)-(5-phospho-beta-D-ribosyl)glycinamide + ADP + phosphate + H(+). It functions in the pathway purine metabolism; IMP biosynthesis via de novo pathway; N(1)-(5-phospho-D-ribosyl)glycinamide from 5-phospho-alpha-D-ribose 1-diphosphate: step 2/2. The chain is Phosphoribosylamine--glycine ligase from Rhizobium meliloti (strain 1021) (Ensifer meliloti).